The sequence spans 179 residues: Cell division protein SepF (179 aa).

Residues glutamate 18–serine 57 form a disordered region. The span at proline 34–serine 57 shows a compositional bias: polar residues.

The protein belongs to the SepF family. As to quaternary structure, homodimer. Interacts with FtsZ.

It is found in the cytoplasm. Its function is as follows. Cell division protein that is part of the divisome complex and is recruited early to the Z-ring. Probably stimulates Z-ring formation, perhaps through the cross-linking of FtsZ protofilaments. Its function overlaps with FtsA. The chain is Cell division protein SepF from Streptococcus pneumoniae (strain Hungary19A-6).